A 77-amino-acid chain; its full sequence is P fimbrial regulatory protein KS71A (77 aa).

This is P fimbrial regulatory protein KS71A (KS71A) from Escherichia coli.